A 387-amino-acid chain; its full sequence is MTVLKMTDLDLQGKRVLIREDLNVPIKDGVVSSDARILASLPTIRLALEKGAAVMVCSHLGRPTEGEFSAENSLKPVAEYLSKALGRDVPLVADYLDGVDVKAGDIVLFENVRFNKGEKKNADELAQKYAALCDVFVMDAFGTAHRAEGSTHGVAKYAKVAAAGPLLAAELEALGKALGAPAQPMAAIVAGSKVSTKLDVLNSLSAICDQLIVGGGIANTFLAAAGHKVGKSLYEPDLLDTARAIAAKVSVPLPTDVVVAKEFAESATATVKLIADVADDDMILDIGPQTAAHFAELLKSSGTILWNGPVGVFEFDQFGEGTKTLAKAIAESKAFSIAGGGDTLAAIDKYGVADQISYISTGGGAFLEFVEGKVLPAVEMLEQRARA.

Residues 21–23, Arg-36, 59–62, Arg-113, and Arg-146 contribute to the substrate site; these read DLN and HLGR. Residues Lys-197, Glu-314, and 340 to 343 each bind ATP; that span reads GGDT.

Belongs to the phosphoglycerate kinase family. In terms of assembly, monomer.

It localises to the cytoplasm. It carries out the reaction (2R)-3-phosphoglycerate + ATP = (2R)-3-phospho-glyceroyl phosphate + ADP. It participates in carbohydrate degradation; glycolysis; pyruvate from D-glyceraldehyde 3-phosphate: step 2/5. This Pseudomonas syringae pv. tomato (strain ATCC BAA-871 / DC3000) protein is Phosphoglycerate kinase.